Consider the following 372-residue polypeptide: Envelope phospholipase OPG057 (372 aa).

The YPPL motif lies at 153-156; that stretch reads YPPL. Residues C185 and C186 are each lipidated (S-palmitoyl cysteine; by host). One can recognise a PLD phosphodiesterase domain in the interval 307-334; that stretch reads FTIQNNTKLLIVDDEYVHITSANFDGTH.

It belongs to the orthopoxvirus OPG057 family. In terms of assembly, interacts with protein OPG190. In terms of processing, palmitoylated. Attachment of the palmitate moiety is essential for correct intracellular targeting and protein function.

It is found in the virion membrane. It localises to the host Golgi apparatus. The protein resides in the host trans-Golgi network. The protein localises to the host endoplasmic reticulum membrane. The catalysed reaction is a 1,2-diacyl-sn-glycero-3-phosphocholine + H2O = a 1,2-diacyl-sn-glycero-3-phosphate + choline + H(+). Major envelope protein that plays a role in the biogenesis of the viral double membrane and in egress of virus from the host cell. Produces the wrapped form of virus that is required for cell-to-cell spread. Acts as a lipase with broad specificity including phospholipase C, phospholipase A, and triacylglycerol lipase activities. This chain is Envelope phospholipase OPG057 (OPG057), found in Cynomys gunnisoni (Gunnison's prairie dog).